Consider the following 497-residue polypeptide: Galactose/methyl galactoside import ATP-binding protein MglA (497 aa).

2 ABC transporter domains span residues 6 to 241 (LEIK…VGRS) and 252 to 497 (VPGE…AKYL). 38 to 45 (GENGAGKS) contacts ATP.

This sequence belongs to the ABC transporter superfamily. Galactose/methyl galactoside importer (TC 3.A.1.2.3) family. In terms of assembly, the complex is composed of one ATP-binding protein (MglA), two transmembrane proteins (MglC) and a solute-binding protein (MglB).

It localises to the cell inner membrane. The catalysed reaction is D-galactose(out) + ATP + H2O = D-galactose(in) + ADP + phosphate + H(+). The enzyme catalyses methyl beta-D-galactoside(out) + ATP + H2O = methyl beta-D-galactoside(in) + ADP + phosphate + H(+). Its function is as follows. Part of the ABC transporter complex MglABC involved in galactose/methyl galactoside import. Responsible for energy coupling to the transport system. The polypeptide is Galactose/methyl galactoside import ATP-binding protein MglA (Treponema denticola (strain ATCC 35405 / DSM 14222 / CIP 103919 / JCM 8153 / KCTC 15104)).